Consider the following 133-residue polypeptide: MALTVKVITPDRVVWKKTVEEIILPSSTGQLGILMNHAPLLTALDIGVMRARMVNTWVPLVLLGGFAQIDNNLVTIIVSDAEEVKAIDEEEANKLLAASLANMEKAQSNREKIESMQNLRRARARMQAILSLK.

Belongs to the ATPase epsilon chain family. F-type ATPases have 2 components, CF(1) - the catalytic core - and CF(0) - the membrane proton channel. CF(1) has five subunits: alpha(3), beta(3), gamma(1), delta(1), epsilon(1). CF(0) has three main subunits: a, b and c.

It localises to the plastid. The protein resides in the chloroplast thylakoid membrane. Functionally, produces ATP from ADP in the presence of a proton gradient across the membrane. The sequence is that of ATP synthase epsilon chain, chloroplastic from Cyanidium caldarium (Red alga).